The sequence spans 959 residues: MKKFFDSRREQGSSGLGSGSSGGGGSSSGLGSGYIGRVFGIGRQQVTVDEVLAEGGFALVFLVRTSNGVKCALKRMFVNNEHDLQVCKREIQIMRDLSGHKNIVGYIDSSINNVSSGDVWEVLILMDFCRGGQVVNLMNQRLQTGFTENEVLQIFCDTCEAVARLHQCKTPIIHRDLKVENILLHDRGHYVLCDFGSATNKFQNPQAEGVNAVEDEIKKYTTLSYRAPEMVNLYSGKIITTKADIWALGCLLYKLCYFTLPFGESQVAICDGSFTIPDNSRYSQDMHCLIRYMLEPDPDKRPDIYQVSYFSFKLLKKECPVPNVQNSPIPAKLPEPVKASEAAVKKTQPKARLTDPIPTTETSIAPRQRPKAGQTQPNPGILPIQPALTPRKRATVQPLPQAAGPSNQPGLLPSVSQPKAQATPSQPLQSSQPKQPQAPPTPQQTPATQTQGLPTQAQATPQHQQQHLLKQQQQQQQQPQQPTAPPQPAGTFYQQQQQQQQQQAQTQQFQAVHPAAQQPVTAQFPVGSQGGAQQQLMQNFYHQQQQQQQQQQQLMAQQAALQQKTAVVVPQSQAQPATAPQAAAAQEPGQIQAPVRQQPKVQTTPPPTIQGQKVGSLTPPSSPKTQRAGHRRILSDVTHSAVFGVPASKSTQLLQAAAAEASLNKSKSATTTPSGSPRTSQQNVSNASEGSTWNPFDDDNFSKLTAEELLNKDFAKLGEGKLPEKLGGSAESLIPGFQPTQGDAFTTPSFSAGTAEKRKGGQAVDSGIPLLSVSDPFIPLQVPDAPEKLIEGLKSPDTSLLLPDLLPMTDPFGSTSDAVIDKADVAVESLIPGLEPPVAQRLPSQTESVTSNRTDSLTGEDSLLDCSLLSNPTAGLLEEFAPIALSAPTHKAAEDSNLISGFGVAEGSEKVAEDEFDPIPVLITKNTQGGHSRNSSGSSESSLPNLARSLLLVDQLIDL.

N-acetylmethionine is present on Met1. Basic and acidic residues predominate over residues 1 to 11; the sequence is MKKFFDSRREQ. Residues 1–27 are disordered; that stretch reads MKKFFDSRREQGSSGLGSGSSGGGGSS. Ser14 carries the phosphoserine modification. A compositionally biased stretch (gly residues) spans 14 to 27; sequence SGLGSGSSGGGGSS. Positions 46-315 constitute a Protein kinase domain; sequence VTVDEVLAEG…QVSYFSFKLL (270 aa). Residues 52–60 and Lys74 each bind ATP; that span reads LAEGGFALV. Asp176 functions as the Proton acceptor in the catalytic mechanism. Position 234 is a phosphotyrosine (Tyr234). Ser235 is modified (phosphoserine). The tract at residues 340–385 is disordered; the sequence is SEAAVKKTQPKARLTDPIPTTETSIAPRQRPKAGQTQPNPGILPIQ. Thr354 and Thr389 each carry phosphothreonine. Arg391 carries the post-translational modification Omega-N-methylarginine. 2 disordered regions span residues 398-514 and 578-630; these read PLPQ…AVHP and TAPQ…RAGH. Residues 404–419 are compositionally biased toward polar residues; it reads GPSNQPGLLPSVSQPK. The segment covering 420–435 has biased composition (low complexity); sequence AQATPSQPLQSSQPKQ. Thr441 is subject to Phosphothreonine. Composition is skewed to low complexity over residues 444 to 481, 494 to 510, and 578 to 603; these read QTPA…QPQQ, QQQQ…QQFQ, and TAPQ…KVQT. Thr604 is modified (phosphothreonine). A compositionally biased stretch (polar residues) spans 609 to 625; it reads IQGQKVGSLTPPSSPKT. At Ser616 the chain carries Phosphoserine. Phosphothreonine is present on Thr618. A phosphoserine mark is found at Ser621, Ser622, Ser635, and Ser648. Phosphothreonine is present on Thr651. Disordered stretches follow at residues 662-699, 727-763, 837-857, and 923-943; these read SLNK…FDDD, GGSA…GGQA, PVAQ…TDSL, and ITKN…ESSL. Residues 670-694 are compositionally biased toward polar residues; it reads TTTPSGSPRTSQQNVSNASEGSTWN. Ser729 carries the post-translational modification Phosphoserine. Composition is skewed to polar residues over residues 738 to 752 and 842 to 857; these read QPTQ…SFSA and LPSQ…TDSL. The segment at 821–958 is clathrin-binding domain (CBD); that stretch reads DKADVAVESL…SLLLVDQLID (138 aa). Ser844, Ser935, and Ser936 each carry phosphoserine. A compositionally biased stretch (low complexity) spans 929-942; the sequence is GGHSRNSSGSSESS.

It belongs to the protein kinase superfamily. Ser/Thr protein kinase family. As to quaternary structure, interacts (via CBD domain) with clathrin. Interacts with AP-2 complex. Interacts with NUMB. Interacts with alpha-adaptin. Interacts with EPS15 isoform 2. Interacts with membrane-bound activated NOTCH1 but not with the inactive full-length form of NOTCH1. Preferentially interacts with monoubiquitinated activated NOTCH1 compared to the non-ubiquitinated form. In terms of processing, autophosphorylated.

Its subcellular location is the cell membrane. It localises to the membrane. It is found in the clathrin-coated pit. The protein localises to the presynapse. It carries out the reaction L-seryl-[protein] + ATP = O-phospho-L-seryl-[protein] + ADP + H(+). It catalyses the reaction L-threonyl-[protein] + ATP = O-phospho-L-threonyl-[protein] + ADP + H(+). Stimulated by clathrin. Its function is as follows. Regulates clathrin-mediated endocytosis by phosphorylating the AP2M1/mu2 subunit of the adaptor protein complex 2 (AP-2) which ensures high affinity binding of AP-2 to cargo membrane proteins during the initial stages of endocytosis. Preferentially, may phosphorylate substrates on threonine residues. Regulates phosphorylation of other AP-2 subunits as well as AP-2 localization and AP-2-mediated internalization of ligand complexes. Phosphorylates NUMB and regulates its cellular localization, promoting NUMB localization to endosomes. Binds to and stabilizes the activated form of NOTCH1, increases its localization in endosomes and regulates its transcriptional activity. The polypeptide is AP2-associated protein kinase 1 (Aak1) (Mus musculus (Mouse)).